Reading from the N-terminus, the 206-residue chain is dITP/XTP pyrophosphatase (206 aa).

Position 7 to 12 (7 to 12 (SSHGYK)) interacts with substrate. Asp70 (proton acceptor) is an active-site residue. A Mg(2+)-binding site is contributed by Asp70. Residues Thr71, 154 to 157 (FGYD), Lys177, and 182 to 183 (HR) each bind substrate.

This sequence belongs to the HAM1 NTPase family. In terms of assembly, homodimer. The cofactor is Mg(2+).

It catalyses the reaction XTP + H2O = XMP + diphosphate + H(+). The catalysed reaction is dITP + H2O = dIMP + diphosphate + H(+). It carries out the reaction ITP + H2O = IMP + diphosphate + H(+). In terms of biological role, pyrophosphatase that catalyzes the hydrolysis of nucleoside triphosphates to their monophosphate derivatives, with a high preference for the non-canonical purine nucleotides XTP (xanthosine triphosphate), dITP (deoxyinosine triphosphate) and ITP. Seems to function as a house-cleaning enzyme that removes non-canonical purine nucleotides from the nucleotide pool, thus preventing their incorporation into DNA/RNA and avoiding chromosomal lesions. This is dITP/XTP pyrophosphatase from Chlamydia pneumoniae (Chlamydophila pneumoniae).